The sequence spans 512 residues: 2-isopropylmalate synthase (512 aa).

One can recognise a Pyruvate carboxyltransferase domain in the interval 4-266 (IQFFDTTLRD…ETNIVLNQFK (263 aa)). Asp-13, His-201, His-203, and Asn-237 together coordinate Mn(2+). Positions 390-512 (ELKHLQVQYV…SKQADFEEVK (123 aa)) are regulatory domain.

This sequence belongs to the alpha-IPM synthase/homocitrate synthase family. LeuA type 1 subfamily. In terms of assembly, homodimer. Mn(2+) serves as cofactor.

It localises to the cytoplasm. It catalyses the reaction 3-methyl-2-oxobutanoate + acetyl-CoA + H2O = (2S)-2-isopropylmalate + CoA + H(+). It participates in amino-acid biosynthesis; L-leucine biosynthesis; L-leucine from 3-methyl-2-oxobutanoate: step 1/4. In terms of biological role, catalyzes the condensation of the acetyl group of acetyl-CoA with 3-methyl-2-oxobutanoate (2-ketoisovalerate) to form 3-carboxy-3-hydroxy-4-methylpentanoate (2-isopropylmalate). The chain is 2-isopropylmalate synthase from Listeria monocytogenes serotype 4b (strain CLIP80459).